Reading from the N-terminus, the 185-residue chain is UPF0301 protein HCH_00550 (185 aa).

Belongs to the UPF0301 (AlgH) family.

The chain is UPF0301 protein HCH_00550 from Hahella chejuensis (strain KCTC 2396).